The following is a 61-amino-acid chain: Metallothionein-1F (61 aa).

Methionine 1 carries the N-acetylmethionine modification. A beta region spans residues 1–29 (MDPNCSCAAGVSCTCAGSCKCKECKCTSC). The a divalent metal cation site is built by cysteine 5, cysteine 7, cysteine 13, cysteine 15, cysteine 19, cysteine 21, cysteine 24, cysteine 26, cysteine 29, cysteine 33, cysteine 34, cysteine 36, cysteine 37, cysteine 41, cysteine 44, cysteine 48, cysteine 50, and cysteine 57. The alpha stretch occupies residues 30–61 (KKSCCSCCPVGCSKCAQGCVCKGASEKCSCCD). Serine 58 carries the phosphoserine modification. Positions 59 and 60 each coordinate a divalent metal cation.

The protein belongs to the metallothionein superfamily. Type 1 family. In terms of assembly, monomer.

Functionally, metallothioneins have a high content of cysteine residues that bind various heavy metals; these proteins are transcriptionally regulated by both heavy metals and glucocorticoids. The polypeptide is Metallothionein-1F (MT1F) (Homo sapiens (Human)).